The primary structure comprises 186 residues: Adenine phosphoribosyltransferase (186 aa).

This sequence belongs to the purine/pyrimidine phosphoribosyltransferase family. Homodimer.

Its subcellular location is the cytoplasm. It carries out the reaction AMP + diphosphate = 5-phospho-alpha-D-ribose 1-diphosphate + adenine. Its pathway is purine metabolism; AMP biosynthesis via salvage pathway; AMP from adenine: step 1/1. In terms of biological role, catalyzes a salvage reaction resulting in the formation of AMP, that is energically less costly than de novo synthesis. This chain is Adenine phosphoribosyltransferase, found in Xanthomonas euvesicatoria pv. vesicatoria (strain 85-10) (Xanthomonas campestris pv. vesicatoria).